Reading from the N-terminus, the 450-residue chain is Phosphoglucosamine mutase (450 aa).

Ser100 functions as the Phosphoserine intermediate in the catalytic mechanism. Mg(2+) contacts are provided by Ser100, Asp240, Asp242, and Asp244. At Ser100 the chain carries Phosphoserine.

The protein belongs to the phosphohexose mutase family. Mg(2+) is required as a cofactor. Activated by phosphorylation.

The enzyme catalyses alpha-D-glucosamine 1-phosphate = D-glucosamine 6-phosphate. Functionally, catalyzes the conversion of glucosamine-6-phosphate to glucosamine-1-phosphate. The protein is Phosphoglucosamine mutase of Desulforudis audaxviator (strain MP104C).